Here is a 2148-residue protein sequence, read N- to C-terminus: Polyketide synthase 1 (2148 aa).

Positions 19–261 (FIFGDQSSCN…TPLAVHAPYH (243 aa)) are N-terminal acylcarrier protein transacylase domain (SAT). A Ketosynthase family 3 (KS3) domain is found at 394 to 829 (DSKIAIIGMS…GGNTALLVED (436 aa)). Active-site for beta-ketoacyl synthase activity residues include C566, H701, and H745. Positions 929–1233 (AFVFSGQGSQ…PSLMRNKDGW (305 aa)) are malonyl-CoA:ACP transacylase (MAT) domain. S1018 functions as the For acyl/malonyl transferase activity in the catalytic mechanism. Positions 1310–1624 (TASVHRIVHE…RKVLNTAMPP (315 aa)) are product template (PT) domain. The interval 1314–1447 (HRIVHESVDK…SSLHFEQPKV (134 aa)) is N-terminal hotdog fold. Residues 1314-1619 (HRIVHESVDK…FQGIPRKVLN (306 aa)) enclose the PKS/mFAS DH domain. The active-site Proton acceptor; for dehydratase activity is H1346. The C-terminal hotdog fold stretch occupies residues 1474–1619 (LNSRMSSGVI…FQGIPRKVLN (146 aa)). D1533 (proton donor; for dehydratase activity) is an active-site residue. Positions 1619–1655 (NTAMPPPKSQNEAQVHSSPAKSRPKPPGSASSVHSGR) are disordered. Polar residues predominate over residues 1627-1638 (SQNEAQVHSSPA). The 75-residue stretch at 1678-1752 (RDPMQALFKI…DLATHLGFDT (75 aa)) folds into the Carrier 1 domain. S1712 is modified (O-(pantetheine 4'-phosphoryl)serine). Residues 1756–1769 (DQSSGQSSSCGGLS) show a composition bias toward low complexity. The interval 1756–1796 (DQSSGQSSSCGGLSPRSDSTGEITSNATTPPSLSPRGSVSG) is disordered. Polar residues predominate over residues 1771–1796 (RSDSTGEITSNATTPPSLSPRGSVSG). Residues 1793-1870 (SVSGSQCKDV…SFKHMFQQGH (78 aa)) form the Carrier 2 domain. S1830 carries the O-(pantetheine 4'-phosphoryl)serine modification. The tract at residues 1882–2146 (LKQYRATSTL…ERVAAFIRST (265 aa)) is thioesterase (TE) domain. S1973 (for thioesterase activity) is an active-site residue.

Polyketide synthase; part of the Pks1 gene cluster that mediates the biosynthesis of an anthraquinone derivative pigment that contributes to conidial pigmentation that provides protection from UV radiation, heat and cold stress. The polyketide synthase Pks1 produces 1-acetyl-2,4,6,8-tetrahydroxy-9,10-anthraquinone though condensation of acetyl-CoA with malonyl-CoA. The dehydratase EthD and the laccase Mlac1 further convert the anthraquinone derivative into the final conidial pigment. In Metarhizium acridum (strain CQMa 102), this protein is Polyketide synthase 1.